The primary structure comprises 334 residues: Holliday junction branch migration complex subunit RuvB (334 aa).

A large ATPase domain (RuvB-L) region spans residues 4–184; that stretch reads ADRLIQPQIQ…FGIPLRLEFY (181 aa). ATP contacts are provided by residues Arg24, Gly65, Lys68, Thr69, Thr70, 131–133, Arg174, Tyr184, and Arg221; that span reads EDY. Thr69 is a Mg(2+) binding site. Residues 185-255 are small ATPAse domain (RuvB-S); the sequence is NIKDLSTIVT…VAEHALDLLD (71 aa). A head domain (RuvB-H) region spans residues 258–334; that stretch reads SEGFDYMDRK…YQHFELIKPE (77 aa). DNA is bound by residues Arg294, Arg313, and Arg318.

Belongs to the RuvB family. Homohexamer. Forms an RuvA(8)-RuvB(12)-Holliday junction (HJ) complex. HJ DNA is sandwiched between 2 RuvA tetramers; dsDNA enters through RuvA and exits via RuvB. An RuvB hexamer assembles on each DNA strand where it exits the tetramer. Each RuvB hexamer is contacted by two RuvA subunits (via domain III) on 2 adjacent RuvB subunits; this complex drives branch migration. In the full resolvosome a probable DNA-RuvA(4)-RuvB(12)-RuvC(2) complex forms which resolves the HJ.

Its subcellular location is the cytoplasm. The enzyme catalyses ATP + H2O = ADP + phosphate + H(+). In terms of biological role, the RuvA-RuvB-RuvC complex processes Holliday junction (HJ) DNA during genetic recombination and DNA repair, while the RuvA-RuvB complex plays an important role in the rescue of blocked DNA replication forks via replication fork reversal (RFR). RuvA specifically binds to HJ cruciform DNA, conferring on it an open structure. The RuvB hexamer acts as an ATP-dependent pump, pulling dsDNA into and through the RuvAB complex. RuvB forms 2 homohexamers on either side of HJ DNA bound by 1 or 2 RuvA tetramers; 4 subunits per hexamer contact DNA at a time. Coordinated motions by a converter formed by DNA-disengaged RuvB subunits stimulates ATP hydrolysis and nucleotide exchange. Immobilization of the converter enables RuvB to convert the ATP-contained energy into a lever motion, pulling 2 nucleotides of DNA out of the RuvA tetramer per ATP hydrolyzed, thus driving DNA branch migration. The RuvB motors rotate together with the DNA substrate, which together with the progressing nucleotide cycle form the mechanistic basis for DNA recombination by continuous HJ branch migration. Branch migration allows RuvC to scan DNA until it finds its consensus sequence, where it cleaves and resolves cruciform DNA. This chain is Holliday junction branch migration complex subunit RuvB, found in Shewanella baltica (strain OS195).